The chain runs to 110 residues: Glutaredoxin-1 (110 aa).

One can recognise a Glutaredoxin domain in the interval 7-110; sequence IKHVKDLIAE…EELLEPILAN (104 aa). Residue Lys11 forms a Glycyl lysine isopeptide (Lys-Gly) (interchain with G-Cter in ubiquitin) linkage. Residues 24-29, Gln63, Val75, and 88-89 each bind glutathione; these read KTYCPY and ND. Cys27 is modified (S-glutathionyl cysteine; alternate). Cys27 and Cys30 are oxidised to a cystine.

This sequence belongs to the glutaredoxin family.

Its subcellular location is the cytoplasm. It localises to the nucleus. The catalysed reaction is 2 glutathione + H2O2 = glutathione disulfide + 2 H2O. It catalyses the reaction 1-chloro-2,4-dinitrobenzene + glutathione = 2,4-dinitrophenyl-S-glutathione + chloride + H(+). The enzyme catalyses RX + glutathione = an S-substituted glutathione + a halide anion + H(+). Component of the glutathione system which performs several activities such as glutathione-dependent oxidoreductase, glutathione peroxidase and glutathione S-transferase (GST) activity. The disulfide bond functions as an electron carrier in the glutathione-dependent synthesis of deoxyribonucleotides by the enzyme ribonucleotide reductase. In addition, it is also involved in reducing cytosolic protein- and non-protein-disulfides in a coupled system with glutathione reductase. Required for resistance to reactive oxygen species (ROS) by directly reducing hydroperoxides and for the detoxification of ROS-mediated damage. GRX1 is less active as an oxidoreductase than GRX2. The sequence is that of Glutaredoxin-1 (GRX1) from Saccharomyces cerevisiae (strain ATCC 204508 / S288c) (Baker's yeast).